Consider the following 259-residue polypeptide: Uridylate kinase (259 aa).

10–13 (KLSG) contacts ATP. Gly-52 lines the UMP pocket. ATP is bound by residues Gly-53 and Arg-57. Residues Asp-72 and 134 to 141 (NGQPFLTT) each bind UMP. Tyr-168 and Asp-171 together coordinate ATP. The disordered stretch occupies residues 236-259 (ISSSPEKSEEFGNEVLASPAESTA).

This sequence belongs to the UMP kinase family. Homohexamer.

It localises to the cytoplasm. It catalyses the reaction UMP + ATP = UDP + ADP. It functions in the pathway pyrimidine metabolism; CTP biosynthesis via de novo pathway; UDP from UMP (UMPK route): step 1/1. Its activity is regulated as follows. Inhibited by UTP. Functionally, catalyzes the reversible phosphorylation of UMP to UDP. The chain is Uridylate kinase from Frankia casuarinae (strain DSM 45818 / CECT 9043 / HFP020203 / CcI3).